The primary structure comprises 485 residues: Glycogen synthase (485 aa).

Lys20 is an ADP-alpha-D-glucose binding site.

This sequence belongs to the glycosyltransferase 1 family. Bacterial/plant glycogen synthase subfamily.

The catalysed reaction is [(1-&gt;4)-alpha-D-glucosyl](n) + ADP-alpha-D-glucose = [(1-&gt;4)-alpha-D-glucosyl](n+1) + ADP + H(+). It functions in the pathway glycan biosynthesis; glycogen biosynthesis. Its function is as follows. Synthesizes alpha-1,4-glucan chains using ADP-glucose. This is Glycogen synthase from Vibrio vulnificus (strain CMCP6).